The chain runs to 74 residues: Cytochrome c oxidase assembly factor 5 (74 aa).

Residues 27 to 65 (QSDCVLKEGKSPRQCLKEGNCKALKYSFFECKRSMLDAR) form the CHCH domain. The Cx10C motif signature appears at 30-41 (CVLKEGKSPRQC). Intrachain disulfides connect C30–C57 and C41–C47. S37 is subject to Phosphoserine. The Cx9C motif motif lies at 47–57 (CKALKYSFFEC).

It belongs to the PET191 family.

In terms of biological role, involved in an early step of the mitochondrial complex IV assembly process. This is Cytochrome c oxidase assembly factor 5 (COA5) from Bos taurus (Bovine).